The primary structure comprises 437 residues: MAAGTLYTYPENWRAFKALIAAQYSGAQVRVLSAPPHFHFGQTNRTPEFLRKFPAGKVPAFEGDDGFCVFESNAIAYYVSNEELRGSTPEAAAQVVQWVSFADSDIVPPASTWVFPTLGIMHHNKQATENAKEEVRRILGLLDAYLKTRTFLVGERVTLADITVVCTLLWLYKQVLEPSFRQAFPNTNRWFLTCINQPQFRAVLGEVKLCEKMAQFDAKKFAETQPKKDTPRKEKGSREEKQKPQAERKEEKKAAAPAPEEEMDECEQALAAEPKAKDPFAHLPKSTFVLDEFKRKYSNEDTLSVALPYFWEHFDKDGWSLWYSEYRFPEELTQTFMSCNLITGMFQRLDKLRKNAFASVILFGTNNSSSISGVWVFRGQELAFPLSPDWQVDYESYTWRKLDPGSEETQTLVREYFSWEGAFQHVGKAFNQGKIFK.

Residue Ala-2 is modified to N-acetylalanine. The GST N-terminal domain maps to 2 to 87 (AAGTLYTYPE…YVSNEELRGS (86 aa)). Residues 88-216 (TPEAAAQVVQ…VKLCEKMAQF (129 aa)) form the GST C-terminal domain. 2 positions are modified to N6-acetyllysine: Lys-147 and Lys-212. Residues 221 to 254 (FAETQPKKDTPRKEKGSREEKQKPQAERKEEKKA) are compositionally biased toward basic and acidic residues. The interval 221 to 268 (FAETQPKKDTPRKEKGSREEKQKPQAERKEEKKAAAPAPEEEMDECEQ) is disordered. Residue Lys-253 forms a Glycyl lysine isopeptide (Lys-Gly) (interchain with G-Cter in SUMO1) linkage. One can recognise an EF-1-gamma C-terminal domain in the interval 276–437 (AKDPFAHLPK…KAFNQGKIFK (162 aa)). Lys-285 participates in a covalent cross-link: Glycyl lysine isopeptide (Lys-Gly) (interchain with G-Cter in SUMO2). Lys-401 carries the post-translational modification N6-acetyllysine. The residue at position 434 (Lys-434) is an N6-acetyllysine; alternate. Lys-434 carries the post-translational modification N6-malonyllysine; alternate.

In terms of assembly, EF-1 is composed of four subunits: alpha, beta, delta, and gamma. As to expression, highly expressed in pancreatic tumor tissue and to a lesser extent in normal kidney, intestine, pancreas, stomach, lung, brain, spleen and liver.

Probably plays a role in anchoring the complex to other cellular components. The protein is Elongation factor 1-gamma (EEF1G) of Homo sapiens (Human).